A 190-amino-acid polypeptide reads, in one-letter code: Threonylcarbamoyl-AMP synthase (190 aa).

The YrdC-like domain occupies 7 to 190; it reads NFVLADIVRA…ALTGKRFRQG (184 aa).

This sequence belongs to the SUA5 family. TsaC subfamily.

The protein resides in the cytoplasm. The catalysed reaction is L-threonine + hydrogencarbonate + ATP = L-threonylcarbamoyladenylate + diphosphate + H2O. In terms of biological role, required for the formation of a threonylcarbamoyl group on adenosine at position 37 (t(6)A37) in tRNAs that read codons beginning with adenine. Catalyzes the conversion of L-threonine, HCO(3)(-)/CO(2) and ATP to give threonylcarbamoyl-AMP (TC-AMP) as the acyladenylate intermediate, with the release of diphosphate. The sequence is that of Threonylcarbamoyl-AMP synthase from Yersinia pestis bv. Antiqua (strain Angola).